A 193-amino-acid polypeptide reads, in one-letter code: Spermatogenesis-associated protein 3 (193 aa).

Residues 1–16 (MKKVKKKKSDSRRRRN) are compositionally biased toward basic residues. The interval 1–92 (MKKVKKKKSD…SPFLVPMEPK (92 aa)) is disordered. Residues 17 to 35 (SISPQTSSDSSQQPSSETP) show a composition bias toward low complexity. Positions 36 to 48 (PSCPEPASPPSKP) are enriched in pro residues.

In terms of tissue distribution, strongly expressed in testis. Faintly expressed in epididymis, ovary, spleen, kidney, lung, heart, brain, epididymis, liver and skeletal muscle.

The protein resides in the cell projection. Its subcellular location is the cilium. It is found in the flagellum. The polypeptide is Spermatogenesis-associated protein 3 (Spata3) (Mus musculus (Mouse)).